A 174-amino-acid polypeptide reads, in one-letter code: Early E1A protein (174 aa).

The tract at residues P40–L48 is interaction with RB1 in competition with E2F1. The short motif at L106–E110 is the LXCXE motif, interaction with host RB1 element. The segment at C145–C163 is a zinc-finger region.

This sequence belongs to the adenoviridae E1A protein family. Interacts with host UBE2I; this interaction interferes with polySUMOylation. Interacts with host RB1; this interaction induces the aberrant dissociation of RB1-E2F1 complex thereby disrupting the activity of RB1 and activating E2F1-regulated genes. Interacts with host ATF7; the interaction enhances ATF7-mediated viral transactivation activity which requires the zinc binding domains of both proteins. Isoform early E1A 32 kDa protein and isoform early E1A 26 kDa protein interact (via N-terminus) with CUL1 and E3 ubiquitin ligase RBX1; these interactions inhibit RBX1-CUL1-dependent elongation reaction of ubiquitin chains and attenuate ubiquitination of SCF(FBXW7) target proteins. Interacts (via PXLXP motif) with host ZMYND11/BS69 (via MYND-type zinc finger); this interaction inhibits E1A mediated transactivation. Interacts with host EP300; this interaction stimulates the acetylation of RB1 by recruiting EP300 and RB1 into a multimeric-protein complex. Interacts with host CTBP1 and CTBP2; this interaction seems to potentiate viral replication. Interacts with host DCAF7. Interacts with host DYRK1A. Interacts with host KPNA4; this interaction allows E1A import into the host nucleus. Interacts with host EP400; this interaction stabilizes MYC. Interacts with host TBP protein; this interaction probably disrupts the TBP-TATA complex.

It localises to the host nucleus. Functionally, plays a role in viral genome replication by driving entry of quiescent cells into the cell cycle. Stimulation of progression from G1 to S phase allows the virus to efficiently use the cellular DNA replicating machinery to achieve viral genome replication. E1A protein has both transforming and trans-activating activities. Induces the disassembly of the E2F1 transcription factor from RB1 by direct competition for the same binding site on RB1, with subsequent transcriptional activation of E2F1-regulated S-phase genes and of the E2 region of the adenoviral genome. Release of E2F1 leads to the ARF-mediated inhibition of MDM2 and causes TP53/p53 to accumulate because it is not targeted for degradation by MDM2-mediated ubiquitination anymore. This increase in TP53, in turn, would arrest the cell proliferation and direct its death but this effect is counteracted by the viral protein E1B-55K. Inactivation of the ability of RB1 to arrest the cell cycle is critical for cellular transformation, uncontrolled cellular growth and proliferation induced by viral infection. Interaction with RBX1 and CUL1 inhibits ubiquitination of the proteins targeted by SCF(FBXW7) ubiquitin ligase complex, and may be linked to unregulated host cell proliferation. The tumorigenesis-restraining activity of E1A may be related to the disruption of the host CtBP-CtIP complex through the CtBP binding motif. The sequence is that of Early E1A protein from Canine adenovirus serotype 1 (strain RI261) (CAdV-1).